Consider the following 141-residue polypeptide: Nucleoside diphosphate kinase (141 aa).

ATP contacts are provided by K11, F59, R87, T93, R104, and N114. Residue H117 is the Pros-phosphohistidine intermediate of the active site.

The protein belongs to the NDK family. Homotetramer. Mg(2+) is required as a cofactor.

The protein resides in the cytoplasm. It catalyses the reaction a 2'-deoxyribonucleoside 5'-diphosphate + ATP = a 2'-deoxyribonucleoside 5'-triphosphate + ADP. The catalysed reaction is a ribonucleoside 5'-diphosphate + ATP = a ribonucleoside 5'-triphosphate + ADP. Major role in the synthesis of nucleoside triphosphates other than ATP. The ATP gamma phosphate is transferred to the NDP beta phosphate via a ping-pong mechanism, using a phosphorylated active-site intermediate. This chain is Nucleoside diphosphate kinase, found in Methylibium petroleiphilum (strain ATCC BAA-1232 / LMG 22953 / PM1).